A 268-amino-acid chain; its full sequence is Cyclohexadienyl dehydratase (268 aa).

The signal sequence occupies residues 1 to 25 (MPKSFRHLVQALACLALLASASLQA).

It belongs to the bacterial solute-binding protein 3 family. In terms of assembly, homodimer.

Its subcellular location is the periplasm. It catalyses the reaction prephenate + H(+) = 3-phenylpyruvate + CO2 + H2O. It carries out the reaction L-arogenate + H(+) = L-phenylalanine + CO2 + H2O. It functions in the pathway amino-acid biosynthesis; L-phenylalanine biosynthesis; L-phenylalanine from L-arogenate: step 1/1. Its pathway is amino-acid biosynthesis; L-phenylalanine biosynthesis; phenylpyruvate from prephenate: step 1/1. Its function is as follows. Forms alternative pathway for phenylalanine biosynthesis. Can catalyze two reactions: prephenate dehydratase and arogenate dehydratase. May have a role in chemotaxis or transport. This is Cyclohexadienyl dehydratase (pheC) from Pseudomonas aeruginosa (strain ATCC 15692 / DSM 22644 / CIP 104116 / JCM 14847 / LMG 12228 / 1C / PRS 101 / PAO1).